A 551-amino-acid polypeptide reads, in one-letter code: Bestrophin-1 (551 aa).

The Cytoplasmic segment spans residues 1-31 (MTITYTNKVANARLGSFSSLLLCWRGSIYKL). Alanine 10 is a Ca(2+) binding site. Residues 32-51 (LYGEFLVFIFLYYSIRGLYR) traverse the membrane as a helical segment. Topologically, residues 52–60 (MVLSSDQQL) are extracellular. The helical transmembrane segment at 61 to 82 (LFEKLALYCDSYIQLIPISFVL) threads the bilayer. Residues 83 to 237 (GFYVTLVVSR…DWISIPLVYT (155 aa)) are Cytoplasmic-facing. Residues 238–255 (QVVTVAVYSFFLACLIGR) traverse the membrane as a helical segment. At 256–274 (QFLNPNKDYPGHEMDLVVP) the chain is on the extracellular side. A helical membrane pass occupies residues 275–288 (VFTILQFLFYMGWL). Residues 289–551 (KVAEQLINPF…EAGTKPVLYE (263 aa)) lie on the Cytoplasmic side of the membrane. Positions 293, 296, 301, and 304 each coordinate Ca(2+). The interval 346–379 (PYTAASARSRRHSFMGSTFNISLKKEDLELWSKE) is auto-inhibitory segment. A disordered region spans residues 459–489 (SHCGPQAPSSHPTEQSAPSSSDTGDGPSTDY). Residues 465–475 (APSSHPTEQSA) show a composition bias toward polar residues. Over residues 476–488 (PSSSDTGDGPSTD) the composition is skewed to low complexity.

This sequence belongs to the anion channel-forming bestrophin (TC 1.A.46) family. Calcium-sensitive chloride channel subfamily. As to quaternary structure, interacts with YWHAG; this interaction promotes the ligand-gated L-glutamate channel activity leading to the positive regulation of NMDA glutamate receptor activity through the L-glutamate secretion.

It localises to the cell membrane. Its subcellular location is the basolateral cell membrane. The enzyme catalyses 4-aminobutanoate(in) = 4-aminobutanoate(out). It catalyses the reaction L-glutamate(out) = L-glutamate(in). The catalysed reaction is chloride(in) = chloride(out). It carries out the reaction hydrogencarbonate(in) = hydrogencarbonate(out). The enzyme catalyses D-serine(in) = D-serine(out). Inactivated by sulfhydryl-reactive agents. In terms of biological role, ligand-gated anion channel that allows the movement of anions across cell membranes when activated by calcium (Ca2+). Allows the movement of chloride and hydrogencarbonate. Found in a partially open conformation leading to significantly smaller chloride movement. Upon F2R/PAR-1 activation, the sequestered calcium is released into the cytosol of astrocytes, leading to the (Ca2+)-dependent release of L-glutamate into the synaptic cleft that targets the neuronal postsynaptic GRIN2A/NMDAR receptor resulting in the synaptic plasticity regulation. Upon activation of the norepinephrine-alpha-1 adrenergic receptor signaling pathway, transports as well D-serine than L-glutamate in a (Ca2+)-dependent manner, leading to activation of adjacent NMDAR receptors and therefore regulates the heterosynaptic long-term depression and metaplasticity during initial memory acquisition. Releases the 4-aminobutanoate neurotransmitter in a (Ca2+)-dependent manner, and participates in its tonic release from cerebellar glial cells. The sequence is that of Bestrophin-1 from Mus musculus (Mouse).